The sequence spans 405 residues: Histone deacetylase clr6 (405 aa).

The tract at residues K6–G318 is histone deacetylase. H138 is an active-site residue.

Belongs to the histone deacetylase family. HD type 1 subfamily. In terms of assembly, heterotetramer of alp13, clr6, prw1 and pst2.

The protein localises to the nucleus. It catalyses the reaction N(6)-acetyl-L-lysyl-[histone] + H2O = L-lysyl-[histone] + acetate. Functionally, responsible for the deacetylation of lysine residues on the N-terminal part of the core histones (H2A, H2B, H3 and H4). Histone deacetylation gives a tag for epigenetic repression and plays an important role in transcriptional regulation, cell cycle progression and developmental events. Histone deacetylases act via the formation of large multiprotein complexes. Has a role in chromatin assembly and chromosome segregation. The chain is Histone deacetylase clr6 (clr6) from Schizosaccharomyces pombe (strain 972 / ATCC 24843) (Fission yeast).